The chain runs to 225 residues: Holliday junction branch migration complex subunit RuvA (225 aa).

A domain I region spans residues 1 to 71 (MISWINGELV…EDSDLLFGFT (71 aa)). The interval 72–150 (SKDQKFFFIE…SKIQIEEEKG (79 aa)) is domain II. A flexible linker region spans residues 151-161 (QEEFEITNPEI). The segment at 161 to 225 (IYKLMEDLQL…LDQGNSNLAR (65 aa)) is domain III.

Belongs to the RuvA family. In terms of assembly, homotetramer. Forms an RuvA(8)-RuvB(12)-Holliday junction (HJ) complex. HJ DNA is sandwiched between 2 RuvA tetramers; dsDNA enters through RuvA and exits via RuvB. An RuvB hexamer assembles on each DNA strand where it exits the tetramer. Each RuvB hexamer is contacted by two RuvA subunits (via domain III) on 2 adjacent RuvB subunits; this complex drives branch migration. In the full resolvosome a probable DNA-RuvA(4)-RuvB(12)-RuvC(2) complex forms which resolves the HJ.

It localises to the cytoplasm. In terms of biological role, the RuvA-RuvB-RuvC complex processes Holliday junction (HJ) DNA during genetic recombination and DNA repair, while the RuvA-RuvB complex plays an important role in the rescue of blocked DNA replication forks via replication fork reversal (RFR). RuvA specifically binds to HJ cruciform DNA, conferring on it an open structure. The RuvB hexamer acts as an ATP-dependent pump, pulling dsDNA into and through the RuvAB complex. HJ branch migration allows RuvC to scan DNA until it finds its consensus sequence, where it cleaves and resolves the cruciform DNA. The chain is Holliday junction branch migration complex subunit RuvA from Prochlorococcus marinus (strain MIT 9215).